A 403-amino-acid chain; its full sequence is Argininosuccinate synthase (403 aa).

10 to 18 (AYSGGVDTS) serves as a coordination point for ATP. Y89 is an L-citrulline binding site. ATP is bound at residue G119. The L-aspartate site is built by T121, N125, and D126. N125 contributes to the L-citrulline binding site. Residues R129, S177, S186, E262, and Y274 each contribute to the L-citrulline site.

The protein belongs to the argininosuccinate synthase family. Type 1 subfamily. As to quaternary structure, homotetramer.

It is found in the cytoplasm. The enzyme catalyses L-citrulline + L-aspartate + ATP = 2-(N(omega)-L-arginino)succinate + AMP + diphosphate + H(+). It functions in the pathway amino-acid biosynthesis; L-arginine biosynthesis; L-arginine from L-ornithine and carbamoyl phosphate: step 2/3. The protein is Argininosuccinate synthase of Synechococcus sp. (strain JA-3-3Ab) (Cyanobacteria bacterium Yellowstone A-Prime).